Reading from the N-terminus, the 512-residue chain is Sucrose-6-phosphate hydrolase (512 aa).

Substrate-binding positions include 40 to 43, Gln59, Trp67, 102 to 103, 165 to 166, Glu229, and Trp311; these read WMND, FS, and RD. Residue Asp43 is part of the active site.

It belongs to the glycosyl hydrolase 32 family.

The protein localises to the cytoplasm. It catalyses the reaction Hydrolysis of terminal non-reducing beta-D-fructofuranoside residues in beta-D-fructofuranosides.. It functions in the pathway glycan biosynthesis; sucrose metabolism. The polypeptide is Sucrose-6-phosphate hydrolase (sacA) (Zymomonas mobilis subsp. mobilis (strain ATCC 10988 / DSM 424 / LMG 404 / NCIMB 8938 / NRRL B-806 / ZM1)).